A 699-amino-acid polypeptide reads, in one-letter code: Long-chain-fatty-acid--CoA ligase 1 (699 aa).

Met1 bears the N-acetylmethionine mark. Tyr9 is modified (3'-nitrotyrosine). Residues 25 to 45 (LPTNTLMGFGAFAALTTFWYA) traverse the membrane as a helical; Signal-anchor for type III membrane protein segment. Topologically, residues 46–699 (TRPKALKPPC…IDELYSTIKI (654 aa)) are cytoplasmic. Tyr85 carries the post-translational modification Phosphotyrosine. Tyr86 is subject to 3'-nitrotyrosine. Ser136 is a glycosylation site (O-linked (GlcNAc) serine). An N6-acetyllysine mark is found at Lys208, Lys357, and Lys387. Ser621 is modified (phosphoserine). Lys633 is subject to N6-acetyllysine.

This sequence belongs to the ATP-dependent AMP-binding enzyme family. Mg(2+) serves as cofactor. As to expression, liver, heart, epididymal adipose and to a lesser extent brain, small intestine and lung.

The protein resides in the mitochondrion outer membrane. It localises to the peroxisome membrane. It is found in the microsome membrane. The protein localises to the endoplasmic reticulum membrane. It carries out the reaction a long-chain fatty acid + ATP + CoA = a long-chain fatty acyl-CoA + AMP + diphosphate. It catalyses the reaction (5Z,8Z,11Z,14Z)-eicosatetraenoate + ATP + CoA = (5Z,8Z,11Z,14Z)-eicosatetraenoyl-CoA + AMP + diphosphate. The enzyme catalyses 3,7,11,15-tetramethylhexadecanoate + ATP + CoA = phytanoyl-CoA + AMP + diphosphate. The catalysed reaction is hexadecanoate + ATP + CoA = hexadecanoyl-CoA + AMP + diphosphate. It carries out the reaction (E)-hexadec-2-enoate + ATP + CoA = (2E)-hexadecenoyl-CoA + AMP + diphosphate. It catalyses the reaction 2,6,10,14-tetramethylpentadecanoate + ATP + CoA = pristanoyl-CoA + AMP + diphosphate. The enzyme catalyses 14,15-epoxy-(5Z,8Z,11Z)-eicosatrienoate + ATP + CoA = 14,15-epoxy-(5Z,8Z,11Z)-eicosatrienoyl-CoA + AMP + diphosphate. The catalysed reaction is 5-hydroxy-(6E,8Z,11Z,14Z)-eicosatetraenoate + ATP + CoA = 5-hydroxy-(6E,8Z,11Z,14Z)-eicosatetraenoyl-CoA + AMP + diphosphate. It carries out the reaction 12-hydroxy-(5Z,8Z,10E,14Z)-eicosatetraenoate + ATP + CoA = 12-hydroxy-(5Z,8Z,10E,14Z)-eicosatetraenoyl-CoA + AMP + diphosphate. It catalyses the reaction 15-hydroxy-(5Z,8Z,11Z,13E)-eicosatetraenoate + ATP + CoA = 15-hydroxy-(5Z,8Z,11Z,13E)-eicosatetraenoyl-CoA + AMP + diphosphate. The enzyme catalyses (9Z)-octadecenoate + ATP + CoA = (9Z)-octadecenoyl-CoA + AMP + diphosphate. Inhibited at high temperature and by arachidonate. Functionally, catalyzes the conversion of long-chain fatty acids to their active form acyl-CoAs for both synthesis of cellular lipids, and degradation via beta-oxidation. Preferentially uses palmitoleate, oleate and linoleate. Preferentially activates arachidonate than epoxyeicosatrienoic acids (EETs) or hydroxyeicosatrienoic acids (HETEs). The polypeptide is Long-chain-fatty-acid--CoA ligase 1 (Rattus norvegicus (Rat)).